A 110-amino-acid polypeptide reads, in one-letter code: uncharacterized protein (110 aa).

This is an uncharacterized protein from Human cytomegalovirus (strain AD169) (HHV-5).